We begin with the raw amino-acid sequence, 249 residues long: tRNA (guanine-N(1)-)-methyltransferase (249 aa).

S-adenosyl-L-methionine contacts are provided by residues Gly113 and 133 to 138 (IGDFVV).

Belongs to the RNA methyltransferase TrmD family. As to quaternary structure, homodimer.

It is found in the cytoplasm. It carries out the reaction guanosine(37) in tRNA + S-adenosyl-L-methionine = N(1)-methylguanosine(37) in tRNA + S-adenosyl-L-homocysteine + H(+). In terms of biological role, specifically methylates guanosine-37 in various tRNAs. The polypeptide is tRNA (guanine-N(1)-)-methyltransferase (Neisseria meningitidis serogroup C (strain 053442)).